We begin with the raw amino-acid sequence, 315 residues long: Protoheme IX farnesyltransferase (315 aa).

9 helical membrane-spanning segments follow: residues 34 to 54 (VISLVVFTGAAGLAMAPGPIN), 55 to 75 (PLIAAVSILCICMASGAAGAI), 105 to 125 (ALGFGIGLSVASVLLMWLAAN), 127 to 147 (LAAFILAFSIFFYAVIYTMWL), 155 to 175 (IVIGGAAGAFPPMIGWAATTG), 177 to 197 (LGVLPVVMFAIVFLWTPPHFW), 226 to 246 (WQILFYTLILSAVSLVPSFLH), 251 to 271 (LYTGVASLLDAGFVACAVGVL), and 294 to 314 (YSLAYLFLLFCGLLADHFLIM).

This sequence belongs to the UbiA prenyltransferase family. Protoheme IX farnesyltransferase subfamily.

It is found in the cell inner membrane. The catalysed reaction is heme b + (2E,6E)-farnesyl diphosphate + H2O = Fe(II)-heme o + diphosphate. The protein operates within porphyrin-containing compound metabolism; heme O biosynthesis; heme O from protoheme: step 1/1. Converts heme B (protoheme IX) to heme O by substitution of the vinyl group on carbon 2 of heme B porphyrin ring with a hydroxyethyl farnesyl side group. The sequence is that of Protoheme IX farnesyltransferase from Gluconacetobacter diazotrophicus (strain ATCC 49037 / DSM 5601 / CCUG 37298 / CIP 103539 / LMG 7603 / PAl5).